Consider the following 688-residue polypeptide: Eukaryotic translation initiation factor 3 subunit B (688 aa).

Residues 1–43 form a disordered region; sequence MLESERPERDMEEEGEESNEEEEEEGMSFSDPEGFEDDISDEE. Acidic residues-rich tracts occupy residues 10–26 and 33–43; these read DMEE…EEEG and EGFEDDISDEE. The region spanning 61-144 is the RRM domain; it reads SVIVVDNVPQ…HTFRVNLFTD (84 aa). WD repeat units lie at residues 164–206, 208–246, 248–293, 297–335, 338–373, 436–492, 525–570, and 635–680; these read KDFG…VPVE, RARW…QIQR, SHQG…NKRG, ESSA…LLDK, LKIT…TLMQ, EMKD…TIFW, AEHY…LQKN, and TYRE…FFVT. Residues 589–640 adopt a coiled-coil conformation; the sequence is SQDQIKQIKKDLKKYSKIFEQKDRLSQTKASKELIERRRAMMEEYKTYREMA.

Belongs to the eIF-3 subunit B family. Component of the eukaryotic translation initiation factor 3 (eIF-3) complex, which is composed of 13 subunits: eif3a, eif3b, eif3c, eif3d, eif3e, eif3f, eif3g, eif3h, eif3i, eif3j, eif3k, eif3l and eif3m.

Its subcellular location is the cytoplasm. The protein localises to the stress granule. In terms of biological role, RNA-binding component of the eukaryotic translation initiation factor 3 (eIF-3) complex, which is involved in protein synthesis of a specialized repertoire of mRNAs and, together with other initiation factors, stimulates binding of mRNA and methionyl-tRNAi to the 40S ribosome. The eIF-3 complex specifically targets and initiates translation of a subset of mRNAs involved in cell proliferation. The polypeptide is Eukaryotic translation initiation factor 3 subunit B (eif3b) (Xenopus laevis (African clawed frog)).